Reading from the N-terminus, the 193-residue chain is Potassium-transporting ATPase KdpC subunit (193 aa).

A helical membrane pass occupies residues 7–27 (PLVVLFVVLTAVTGLAYPAVM).

It belongs to the KdpC family. In terms of assembly, the system is composed of three essential subunits: KdpA, KdpB and KdpC.

Its subcellular location is the cell inner membrane. Part of the high-affinity ATP-driven potassium transport (or Kdp) system, which catalyzes the hydrolysis of ATP coupled with the electrogenic transport of potassium into the cytoplasm. This subunit acts as a catalytic chaperone that increases the ATP-binding affinity of the ATP-hydrolyzing subunit KdpB by the formation of a transient KdpB/KdpC/ATP ternary complex. The sequence is that of Potassium-transporting ATPase KdpC subunit from Burkholderia orbicola (strain MC0-3).